The following is a 460-amino-acid chain: ATP synthase subunit beta (460 aa).

Position 150-157 (150-157 (GGAGVGKT)) interacts with ATP.

This sequence belongs to the ATPase alpha/beta chains family. F-type ATPases have 2 components, CF(1) - the catalytic core - and CF(0) - the membrane proton channel. CF(1) has five subunits: alpha(3), beta(3), gamma(1), delta(1), epsilon(1). CF(0) has three main subunits: a(1), b(2) and c(9-12). The alpha and beta chains form an alternating ring which encloses part of the gamma chain. CF(1) is attached to CF(0) by a central stalk formed by the gamma and epsilon chains, while a peripheral stalk is formed by the delta and b chains.

Its subcellular location is the cell inner membrane. It catalyses the reaction ATP + H2O + 4 H(+)(in) = ADP + phosphate + 5 H(+)(out). Its function is as follows. Produces ATP from ADP in the presence of a proton gradient across the membrane. The catalytic sites are hosted primarily by the beta subunits. The sequence is that of ATP synthase subunit beta from Citrobacter koseri (strain ATCC BAA-895 / CDC 4225-83 / SGSC4696).